Here is a 482-residue protein sequence, read N- to C-terminus: Alpha-ketoglutarate semialdehyde dehydrogenase (482 aa).

The tract at residues 1-28 (MTDPSKNYVNGEWVTSETGETTEVTNPA) is disordered. Positions 11 to 25 (GEWVTSETGETTEVT) are enriched in low complexity. Cys284 is a catalytic residue.

This sequence belongs to the aldehyde dehydrogenase family. Homotetramer.

It carries out the reaction 2,5-dioxopentanoate + NADP(+) + H2O = 2-oxoglutarate + NADPH + 2 H(+). It participates in carbohydrate metabolism; D-xylose degradation. In terms of biological role, alpha-ketoglutarate semialdehyde dehydrogenase involved in the degradation of D-xylose, a major component of hemicelluloses such as xylan. Catalyzes the fifth reaction in the xylose utilization pathway through dehydratation of alpha-ketoglutarate semialdehyde (2,5-dioxopentanoate) into alpha-ketoglutarate. This chain is Alpha-ketoglutarate semialdehyde dehydrogenase, found in Haloferax volcanii (strain ATCC 29605 / DSM 3757 / JCM 8879 / NBRC 14742 / NCIMB 2012 / VKM B-1768 / DS2) (Halobacterium volcanii).